We begin with the raw amino-acid sequence, 365 residues long: Uroporphyrinogen decarboxylase (365 aa).

Positions 1–17 (MSANDSPSGQQTTTSAS) are enriched in polar residues. Positions 1 to 20 (MSANDSPSGQQTTTSASLDA) are disordered. Substrate is bound by residues 48–52 (RQAGR), aspartate 97, tyrosine 172, serine 227, and histidine 341.

The protein belongs to the uroporphyrinogen decarboxylase family. Homodimer.

It localises to the cytoplasm. It carries out the reaction uroporphyrinogen III + 4 H(+) = coproporphyrinogen III + 4 CO2. It participates in porphyrin-containing compound metabolism; protoporphyrin-IX biosynthesis; coproporphyrinogen-III from 5-aminolevulinate: step 4/4. Catalyzes the decarboxylation of four acetate groups of uroporphyrinogen-III to yield coproporphyrinogen-III. This chain is Uroporphyrinogen decarboxylase, found in Streptomyces griseus subsp. griseus (strain JCM 4626 / CBS 651.72 / NBRC 13350 / KCC S-0626 / ISP 5235).